A 199-amino-acid polypeptide reads, in one-letter code: Pre-histone-like nucleoprotein (199 aa).

S2 is modified (N-acetylserine; by host). The propeptide occupies 2–23; it reads SILISPSDNTGWGLGTGKMYGG. Position 26 is an N6-acetyllysine; by host (K26). The short motif at 189–199 is the Nuclear localization signal element; that stretch reads RRKASVRRRRT.

It belongs to the adenoviridae histone-like nucleoprotein family. Interacts with the core-capsid bridging protein; this interaction bridges the virus core to the capsid. Interacts with host NPM1; this interaction might play a role in placing the pre-histone-like nucleoprotein on the viral DNA or regulating viral gene expression. Interacts with host HMGB1; this interaction inhibits host immune response. Post-translationally, cleaved near the N-terminus by the viral protease during virion maturation to form the mature protein.

The protein resides in the virion. Its subcellular location is the host nucleus. It localises to the host nucleolus. Plays a role in the inhibition of host immune response within the nucleus. Interacts with cellular nucleosomes and immobilizes the host immune danger signal HMGB1 on chromatin. In turn, prevents HMGB1 release out of the cell and thus decreases inflammation. Also plays a role in the wrapping and condensation of the viral DNA. May also promote viral genome import into the nucleus. The polypeptide is Pre-histone-like nucleoprotein (Murine adenovirus A serotype 1 (MAdV-1)).